Here is a 599-residue protein sequence, read N- to C-terminus: Kelch-like protein 41a (599 aa).

Residues 32-102 (VDCILKVGDR…LYSADIDITD (71 aa)) form the BTB domain. Positions 137–239 (CLAIFRMGLV…PEKYLKEKVE (103 aa)) constitute a BACK domain. 5 Kelch repeats span residues 339–391 (LLYV…EFEN), 393–440 (LFAV…SQNG), 441–488 (LVYC…VHKG), 489–535 (KIVV…SVDG), and 537–591 (LYAV…SMRL).

The protein resides in the cytoplasm. It is found in the cytoskeleton. It localises to the sarcoplasmic reticulum membrane. The protein localises to the endoplasmic reticulum membrane. Involved in skeletal muscle development and differentiation. The chain is Kelch-like protein 41a (klhl41a) from Danio rerio (Zebrafish).